Reading from the N-terminus, the 435-residue chain is Methylenetetrahydrofolate--tRNA-(uracil-5-)-methyltransferase TrmFO (435 aa).

Residue G9–G14 coordinates FAD.

It belongs to the MnmG family. TrmFO subfamily. The cofactor is FAD.

It is found in the cytoplasm. It carries out the reaction uridine(54) in tRNA + (6R)-5,10-methylene-5,6,7,8-tetrahydrofolate + NADH + H(+) = 5-methyluridine(54) in tRNA + (6S)-5,6,7,8-tetrahydrofolate + NAD(+). The catalysed reaction is uridine(54) in tRNA + (6R)-5,10-methylene-5,6,7,8-tetrahydrofolate + NADPH + H(+) = 5-methyluridine(54) in tRNA + (6S)-5,6,7,8-tetrahydrofolate + NADP(+). Catalyzes the folate-dependent formation of 5-methyl-uridine at position 54 (M-5-U54) in all tRNAs. The polypeptide is Methylenetetrahydrofolate--tRNA-(uracil-5-)-methyltransferase TrmFO (Citrifermentans bemidjiense (strain ATCC BAA-1014 / DSM 16622 / JCM 12645 / Bem) (Geobacter bemidjiensis)).